The chain runs to 291 residues: Ajmaline N-methyltransferase (291 aa).

Positions 71-80 are SAM motif I; sequence MLDVGCGIGG. The Vacuolar targeting signal signature appears at 133 to 139; it reads DGAFDLV. The interval 134 to 142 is SAM motif II; it reads GAFDLVLSI. Residues 161–170 form an SAM motif III region; sequence VAASGATIII.

This sequence belongs to the class I-like SAM-binding methyltransferase superfamily. gTMT family. Homodimer. Mainly expressed in roots, but barely detectable in stems and flowers.

The protein resides in the vacuole membrane. The enzyme catalyses ajmaline + S-adenosyl-L-methionine = 4-methylajmaline + S-adenosyl-L-homocysteine + H(+). It catalyses the reaction norajmaline + S-adenosyl-L-methionine = 4-methylnorajmaline + S-adenosyl-L-homocysteine + H(+). It participates in alkaloid biosynthesis; ajmaline biosynthesis. In terms of biological role, N-methyltransferase involved in the biosynthesis of ajmaline-type monoterpenoid indole alkaloids (MIAs) natural products, important plant-derived pharmaceuticals used in the therapy of heart disorders. Catalyzes the indole N-methylation of ajmaline to produce 4-methylajmaline. Also able, with a lower efficiency, to mediates the conversion of norajmaline to 4-methylnorajmaline. The polypeptide is Ajmaline N-methyltransferase (Rauvolfia serpentina (Serpentine wood)).